The sequence spans 217 residues: Frataxin, mitochondrial (217 aa).

Residues 1 to 42 (MWTLGRRSVASFLPRSALPGFAPTRAGAPRPAKDLSLSGLPG) constitute a mitochondrion transit peptide.

It belongs to the frataxin family. Component of the mitochondrial core iron-sulfur cluster (ISC) complex composed of NFS1, LYRM4, NDUFAB1, ISCU, FXN, and FDX2; this complex is a heterohexamer containing two copies of each monomer. Homodimer. Monomer (probable predominant form). Oligomer. Monomers and polymeric aggregates of &gt;1 MDa have been isolated from mitochondria. A small fraction of heterologous overexpressed recombinant frataxin forms high-molecular weight aggregates that incorporate iron. Interacts with LYRM4. Interacts (via ferrous form) with ISCU; the interaction is possible when both are bound to the dimeric form of the cysteine desulfurase complex (NFS1:LYRM4) and the interaction enhances FXN interaction to the dimeric form of the cysteine desulfurase complex (NFS1:LYRM4). Interacts with FECH; one iron-bound FXN monomer seems to interact with a FECH homodimer. Interacts with SDHA and SDHB. Interacts with ACO2; the interaction is dependent on citrate. Interacts with HSPA9. As to quaternary structure, interacts with ACO1. Interacts with ISCU (cytoplasmic form). In terms of processing, processed in two steps by mitochondrial processing peptidase (MPP). MPP first cleaves the precursor to intermediate form and subsequently converts the intermediate to yield frataxin mature form (frataxin(81-210)) which is the predominant form. The additional forms, frataxin(56-210) and frataxin(78-210), seem to be produced when the normal maturation process is impaired; their physiological relevance is unsure.

Its subcellular location is the mitochondrion. It is found in the cytoplasm. The protein localises to the cytosol. It catalyses the reaction 4 Fe(2+) + O2 + 4 H(+) = 4 Fe(3+) + 2 H2O. Functions as an activator of persulfide transfer to the scaffoding protein ISCU as component of the core iron-sulfur cluster (ISC) assembly complex and participates to the [2Fe-2S] cluster assembly. Accelerates sulfur transfer from NFS1 persulfide intermediate to ISCU and to small thiols such as L-cysteine and glutathione leading to persulfuration of these thiols and ultimately sulfide release. Binds ferrous ion and is released from FXN upon the addition of both L-cysteine and reduced FDX2 during [2Fe-2S] cluster assembly. The core iron-sulfur cluster (ISC) assembly complex is involved in the de novo synthesis of a [2Fe-2S] cluster, the first step of the mitochondrial iron-sulfur protein biogenesis. This process is initiated by the cysteine desulfurase complex (NFS1:LYRM4:NDUFAB1) that produces persulfide which is delivered on the scaffold protein ISCU in a FXN-dependent manner. Then this complex is stabilized by FDX2 which provides reducing equivalents to accomplish the [2Fe-2S] cluster assembly. Finally, the [2Fe-2S] cluster is transferred from ISCU to chaperone proteins, including HSCB, HSPA9 and GLRX5. May play a role in the protection against iron-catalyzed oxidative stress through its ability to catalyze the oxidation of Fe(2+) to Fe(3+); the oligomeric form but not the monomeric form has in vitro ferroxidase activity. May be able to store large amounts of iron in the form of a ferrihydrite mineral by oligomerization; however, the physiological relevance is unsure as reports are conflicting and the function has only been shown using heterologous overexpression systems. May function as an iron chaperone protein that protects the aconitase [4Fe-4S]2+ cluster from disassembly and promotes enzyme reactivation. May play a role as a high affinity iron binding partner for FECH that is capable of both delivering iron to ferrochelatase and mediating the terminal step in mitochondrial heme biosynthesis. Its function is as follows. Modulates the RNA-binding activity of ACO1. May be involved in the cytoplasmic iron-sulfur protein biogenesis. May contribute to oxidative stress resistance and overall cell survival. The chain is Frataxin, mitochondrial from Bos taurus (Bovine).